The chain runs to 115 residues: Valyl--tRNA ligase modifier (115 aa).

Functionally, binds to the host (E.coli) valyl--tRNA ligase and thereby changes several of its physicochemical properties. This Enterobacteria phage T4 (Bacteriophage T4) protein is Valyl--tRNA ligase modifier (vs).